The primary structure comprises 134 residues: MSATAKHDSNASPNSDSEDGHHHNNKKECAIEYLKARLNSASAVACGYLQAFVSKTQDFAKVCFLELQNPVVLVNLLLHSSVVCYLCNGYANHNARFLKGKPNSTVLATTAGALGLLTLDGIISKKYYSRYDKK.

Residues 1-23 (MSATAKHDSNASPNSDSEDGHHH) form a disordered region. Ser-12 and Ser-15 each carry phosphoserine. 2 helical membrane passes run 71–87 (VVLVNLLLHSSVVCYLC) and 105–123 (TVLATTAGALGLLTLDGII).

Its subcellular location is the mitochondrion outer membrane. This is Mitochondrial outer membrane protein OM14 (OM14) from Saccharomyces cerevisiae (strain YJM789) (Baker's yeast).